The chain runs to 242 residues: UPF0157 protein PA4798 (242 aa).

Residues 215 to 242 (AGAESTPGGPADTAYFESLRSRVSKPQD) form a disordered region.

It belongs to the UPF0157 (GrpB) family.

The protein is UPF0157 protein PA4798 of Pseudomonas aeruginosa (strain ATCC 15692 / DSM 22644 / CIP 104116 / JCM 14847 / LMG 12228 / 1C / PRS 101 / PAO1).